The following is a 252-amino-acid chain: Small ribosomal subunit protein uS3 (252 aa).

The region spanning 39 to 111 (IRKLINNFAK…EVNLNVLEVK (73 aa)) is the KH type-2 domain. The tract at residues 222 to 252 (KPFASQSSNTPNRRPRNFKGGNNNHVNAKKN) is disordered. Residues 241-252 (GGNNNHVNAKKN) are compositionally biased toward polar residues.

It belongs to the universal ribosomal protein uS3 family. In terms of assembly, part of the 30S ribosomal subunit. Forms a tight complex with proteins S10 and S14.

In terms of biological role, binds the lower part of the 30S subunit head. Binds mRNA in the 70S ribosome, positioning it for translation. In Phytoplasma sp. (strain STRAWB2), this protein is Small ribosomal subunit protein uS3.